The chain runs to 380 residues: MSLSDWHLAVKLADQPLAPKSILQLPETELGEYSLGGYSISFLKQLIAGKLQESVPDPELIDLIYCGRKLKDDQTLDFYGIQPGSTVHVLRKSWPEPDQKPEPVDKVAALREFRVLHTALHSSSSYREAVFKMLSNKESLDQIIVATPGLSSDPIALGVLQDKDLFSVFADPNMLDTLVPAHPALVNAIILVLHSVAGSTPMPGADSSSRSMPSSSYRDMPGGFLFDGLSDDEDDFHPSTRSTPSSSTPSSRPASLGYSGAAGPRPITQSELATALALASTPESSSHTPTPGTQGHSSGTSPMSSGVQSGTPITNDLFSQALQHALQASGQPSLQIQWQPQLQQLRDMGIQDDELSLRALQATGGDIQAALELIFAGGAP.

One can recognise a Ubiquitin-like domain in the interval 18 to 98 (APKSILQLPE…VLRKSWPEPD (81 aa)). The segment at 200–313 (TPMPGADSSS…SSGVQSGTPI (114 aa)) is disordered. Over residues 206–221 (DSSSRSMPSSSYRDMP) the composition is skewed to low complexity. Phosphoserine is present on S230. 2 stretches are compositionally biased toward low complexity: residues 239 to 253 (STRS…SSRP) and 270 to 293 (SELA…TPGT). The span at 294–313 (QGHSSGTSPMSSGVQSGTPI) shows a compositional bias: polar residues. Residues 333 to 377 (SLQIQWQPQLQQLRDMGIQDDELSLRALQATGGDIQAALELIFAG) form the UBA domain.

In terms of assembly, binds ubiquitin. Interacts with MAVS; this interaction enhances TRIM21-dependent 'Lys-27'-linked polyubiquitination of MAVS. In terms of processing, deubiquitinated by OTUD4 which stabilizes UBL7 expression.

Functionally, interferon-stimulated protein that positively regulates RNA virus-triggered innate immune signaling. Mechanistically, promotes 'Lys-27'-linked polyubiquitination of MAVS through TRIM21 leading to enhanced the IFN signaling pathway. This is Ubiquitin-like protein 7 (Ubl7) from Mus musculus (Mouse).